The primary structure comprises 327 residues: ATP-dependent 6-phosphofructokinase (327 aa).

Gly12 is a binding site for ATP. ADP is bound by residues 22–26 and 55–60; these read RGVVR and RYSVSD. ATP is bound by residues 73–74 and 103–106; these read RF and GDGS. Position 104 (Asp104) interacts with Mg(2+). 127 to 129 contributes to the substrate binding site; the sequence is TID. Asp129 functions as the Proton acceptor in the catalytic mechanism. Residue Arg156 participates in ADP binding. Substrate-binding positions include Arg164 and 171-173; that span reads MGR. Residues 187-189, Lys213, and 215-217 contribute to the ADP site; these read GCE and KKH. Substrate is bound by residues Glu224, Arg245, and 251 to 254; that span reads HIQR.

It belongs to the phosphofructokinase type A (PFKA) family. ATP-dependent PFK group I subfamily. Prokaryotic clade 'B1' sub-subfamily. As to quaternary structure, homotetramer. The cofactor is Mg(2+).

Its subcellular location is the cytoplasm. The enzyme catalyses beta-D-fructose 6-phosphate + ATP = beta-D-fructose 1,6-bisphosphate + ADP + H(+). Its pathway is carbohydrate degradation; glycolysis; D-glyceraldehyde 3-phosphate and glycerone phosphate from D-glucose: step 3/4. With respect to regulation, allosterically activated by ADP and other diphosphonucleosides, and allosterically inhibited by phosphoenolpyruvate. Catalyzes the phosphorylation of D-fructose 6-phosphate to fructose 1,6-bisphosphate by ATP, the first committing step of glycolysis. In Hamiltonella defensa subsp. Acyrthosiphon pisum (strain 5AT), this protein is ATP-dependent 6-phosphofructokinase.